Here is a 323-residue protein sequence, read N- to C-terminus: Acetyl-coenzyme A carboxylase carboxyl transferase subunit alpha (323 aa).

Positions 39-293 (RLSKKSQQLT…RRALADSLRQ (255 aa)) constitute a CoA carboxyltransferase C-terminal domain.

Belongs to the AccA family. As to quaternary structure, acetyl-CoA carboxylase is a heterohexamer composed of biotin carboxyl carrier protein (AccB), biotin carboxylase (AccC) and two subunits each of ACCase subunit alpha (AccA) and ACCase subunit beta (AccD).

The protein localises to the cytoplasm. It catalyses the reaction N(6)-carboxybiotinyl-L-lysyl-[protein] + acetyl-CoA = N(6)-biotinyl-L-lysyl-[protein] + malonyl-CoA. Its pathway is lipid metabolism; malonyl-CoA biosynthesis; malonyl-CoA from acetyl-CoA: step 1/1. In terms of biological role, component of the acetyl coenzyme A carboxylase (ACC) complex. First, biotin carboxylase catalyzes the carboxylation of biotin on its carrier protein (BCCP) and then the CO(2) group is transferred by the carboxyltransferase to acetyl-CoA to form malonyl-CoA. The chain is Acetyl-coenzyme A carboxylase carboxyl transferase subunit alpha from Burkholderia multivorans (strain ATCC 17616 / 249).